We begin with the raw amino-acid sequence, 279 residues long: Thymidylate synthase 1 (279 aa).

Arginine 141 to arginine 142 is a binding site for dUMP. Catalysis depends on cysteine 161, which acts as the Nucleophile. DUMP contacts are provided by residues arginine 181–aspartate 184, asparagine 192, and histidine 222–tyrosine 224. Aspartate 184 contributes to the (6R)-5,10-methylene-5,6,7,8-tetrahydrofolate binding site. (6R)-5,10-methylene-5,6,7,8-tetrahydrofolate is bound at residue alanine 278.

The protein belongs to the thymidylate synthase family. Bacterial-type ThyA subfamily. In terms of assembly, homodimer.

The protein localises to the cytoplasm. The enzyme catalyses dUMP + (6R)-5,10-methylene-5,6,7,8-tetrahydrofolate = 7,8-dihydrofolate + dTMP. It participates in pyrimidine metabolism; dTTP biosynthesis. Its function is as follows. Catalyzes the reductive methylation of 2'-deoxyuridine-5'-monophosphate (dUMP) to 2'-deoxythymidine-5'-monophosphate (dTMP) while utilizing 5,10-methylenetetrahydrofolate (mTHF) as the methyl donor and reductant in the reaction, yielding dihydrofolate (DHF) as a by-product. This enzymatic reaction provides an intracellular de novo source of dTMP, an essential precursor for DNA biosynthesis. The polypeptide is Thymidylate synthase 1 (Bacillus subtilis (strain 168)).